A 78-amino-acid chain; its full sequence is Translational regulator CsrA (78 aa).

This sequence belongs to the CsrA/RsmA family. In terms of assembly, homodimer; the beta-strands of each monomer intercalate to form a hydrophobic core, while the alpha-helices form wings that extend away from the core.

Its subcellular location is the cytoplasm. A translational regulator that binds mRNA to regulate translation initiation and/or mRNA stability. Usually binds in the 5'-UTR at or near the Shine-Dalgarno sequence preventing ribosome-binding, thus repressing translation. Its main target seems to be the major flagellin gene, while its function is anatagonized by FliW. This chain is Translational regulator CsrA, found in Geobacter metallireducens (strain ATCC 53774 / DSM 7210 / GS-15).